A 368-amino-acid polypeptide reads, in one-letter code: High affinity transport system protein p37 (368 aa).

A signal peptide spans 1–25 (MLFKKFTWVIPSLFLTIISTSLLIS). Cysteine 26 carries the N-palmitoyl cysteine lipid modification. Residue cysteine 26 is the site of S-diacylglycerol cysteine attachment.

Its subcellular location is the cell membrane. Its function is as follows. P37 is part of a high-affinity transport system. This Mycoplasma genitalium (strain ATCC 33530 / DSM 19775 / NCTC 10195 / G37) (Mycoplasmoides genitalium) protein is High affinity transport system protein p37 (p37).